The chain runs to 137 residues: 3-hydroxyacyl-[acyl-carrier-protein] dehydratase FabZ (137 aa).

His-46 is an active-site residue.

It belongs to the thioester dehydratase family. FabZ subfamily.

It is found in the cytoplasm. It carries out the reaction a (3R)-hydroxyacyl-[ACP] = a (2E)-enoyl-[ACP] + H2O. In terms of biological role, involved in unsaturated fatty acids biosynthesis. Catalyzes the dehydration of short chain beta-hydroxyacyl-ACPs and long chain saturated and unsaturated beta-hydroxyacyl-ACPs. This chain is 3-hydroxyacyl-[acyl-carrier-protein] dehydratase FabZ, found in Thermotoga neapolitana (strain ATCC 49049 / DSM 4359 / NBRC 107923 / NS-E).